A 250-amino-acid chain; its full sequence is Envelope glycoprotein L (250 aa).

A signal peptide spans 1–18 (MELLLFVMSLILLTFSKA). One can recognise a gL betaherpesvirus-type domain in the interval 31–239 (KLDDCIAAVI…EAYNSKLPFR (209 aa)). Cys136 and Cys141 are joined by a disulfide.

It belongs to the herpesviridae glycoprotein L (gL) family. Betaherpesvirinae gL subfamily. As to quaternary structure, interacts with glycoprotein H (gH); this interaction is necessary for the correct processing and cell surface expression of gH. Part of a gH-gL-gO complex.

The protein resides in the virion membrane. It localises to the host cell membrane. The protein localises to the host Golgi apparatus. Its subcellular location is the host trans-Golgi network. The heterodimer glycoprotein H-glycoprotein L is required for the fusion of viral and plasma membranes leading to virus entry into the host cell. Acts as a functional inhibitor of gH and maintains gH in an inhibited form. Upon binding to host integrins, gL dissociates from gH leading to activation of the viral fusion glycoproteins gB and gH. The protein is Envelope glycoprotein L of Homo sapiens (Human).